A 499-amino-acid polypeptide reads, in one-letter code: Cytochrome P450 ARB_01131 (499 aa).

The first 21 residues, 1 to 21 (MLSLIVACLVLPLICYKLVRS), serve as a signal peptide directing secretion. Asn-23 carries an N-linked (GlcNAc...) asparagine glycan. A heme-binding site is contributed by Cys-437.

Belongs to the cytochrome P450 family. Heme serves as cofactor.

Functionally, together with an NADPH cytochrome P450 the enzyme system catalyzes the terminal hydroxylation as the first step in the assimilation of alkanes and fatty acids. The protein is Cytochrome P450 ARB_01131 of Arthroderma benhamiae (strain ATCC MYA-4681 / CBS 112371) (Trichophyton mentagrophytes).